Consider the following 505-residue polypeptide: Probable malate:quinone oxidoreductase (505 aa).

The protein belongs to the MQO family. The cofactor is FAD.

The catalysed reaction is (S)-malate + a quinone = a quinol + oxaloacetate. Its pathway is carbohydrate metabolism; tricarboxylic acid cycle; oxaloacetate from (S)-malate (quinone route): step 1/1. The sequence is that of Probable malate:quinone oxidoreductase from Pseudomonas fluorescens.